Here is a 302-residue protein sequence, read N- to C-terminus: RNA polymerase sigma factor RpoH (302 aa).

The sigma-70 factor domain-2 stretch occupies residues 57–126 (LVTSHLRLVA…IQEYILRSWS (70 aa)). The Interaction with polymerase core subunit RpoC signature appears at 81–84 (ELIS). The tract at residues 235 to 286 (AMDKLNDREKHILTERRLSDNPKTLEELSQVYGVSRERVRQIEVRAFDKLQK) is sigma-70 factor domain-4. Residues 259–278 (LEELSQVYGVSRERVRQIEV) constitute a DNA-binding region (H-T-H motif).

This sequence belongs to the sigma-70 factor family. RpoH subfamily. In terms of assembly, interacts with the RNA polymerase core enzyme.

It localises to the cytoplasm. Functionally, sigma factors are initiation factors that promote the attachment of RNA polymerase to specific initiation sites and are then released. This sigma factor is involved in regulation of expression of heat shock genes. This is RNA polymerase sigma factor RpoH from Zymomonas mobilis subsp. mobilis (strain ATCC 31821 / ZM4 / CP4).